The sequence spans 139 residues: uncharacterized protein (139 aa).

A disordered region spans residues 1 to 116 (MYNPWQVGAS…TRPRVVARGK (116 aa)). Low complexity-rich tracts occupy residues 50 to 70 (RPRPFSSSPRSASGRLRGPRP) and 84 to 110 (LPAYLPPAAALDSQTSAPTVSPVTRPR).

This is an uncharacterized protein from Homo sapiens (Human).